A 495-amino-acid polypeptide reads, in one-letter code: MKYRDLRDFLSLLEQRGELKRISQPIDPYLEMTEIADRTLRAGGPALLFENPKGYSMPVLCNLFGTAKRVAMGMGQEDVSALRDVGKLLAFLKEPDPPKGFRDLFDKLPKFKQVLNMPTKRLNSAPCQEQVWQGEDVDLSRIPVMHCWPEDAAPLVSWGLTITRGPHKERQNLGIYRQQVLGKNKLIMRWLSHRGGALDYQEWCEAHPGERFPVAVALGADPATILAAVTPVPDTLSEYAFAGLLRGHKTEVVKCLSNDLEVPASAEIVLEGYIEQGDMAPEGPYGDHTGYYNEIDNFPVFTVTHITQRQDAIYHSTYTGRPPDEPAVMGVALNEVFVPILQKQFPEIVDFYLPPEGCSYRLAVVTIKKQYAGHAKRVMMGVWSFLRQFMYTKFVIVCDDDINARDWNDVIWAITTRMDPSRDTVLIENTPIDYLDFASPVSGLGSKMGLDATNKWPAETPREWGRPIKMDEDVRARIDALWDELAIFSDKDAKR.

Mn(2+) is bound at residue N172. Prenylated FMN contacts are provided by residues 175–177 (IYR), 189–191 (RWL), and 194–195 (RG). Position 238 (E238) interacts with Mn(2+). D287 functions as the Proton donor in the catalytic mechanism.

Belongs to the UbiD family. Homohexamer. Prenylated FMN is required as a cofactor. It depends on Mn(2+) as a cofactor.

It localises to the cell membrane. The enzyme catalyses a 4-hydroxy-3-(all-trans-polyprenyl)benzoate + H(+) = a 2-(all-trans-polyprenyl)phenol + CO2. The protein operates within cofactor biosynthesis; ubiquinone biosynthesis. Its function is as follows. Catalyzes the decarboxylation of 3-octaprenyl-4-hydroxy benzoate to 2-octaprenylphenol, an intermediate step in ubiquinone biosynthesis. This Yersinia pseudotuberculosis serotype O:1b (strain IP 31758) protein is 3-octaprenyl-4-hydroxybenzoate carboxy-lyase.